The chain runs to 49 residues: Large ribosomal subunit protein bL33 (49 aa).

This sequence belongs to the bacterial ribosomal protein bL33 family.

The protein is Large ribosomal subunit protein bL33 of Clostridium acetobutylicum (strain ATCC 824 / DSM 792 / JCM 1419 / IAM 19013 / LMG 5710 / NBRC 13948 / NRRL B-527 / VKM B-1787 / 2291 / W).